A 238-amino-acid polypeptide reads, in one-letter code: MNIPDPQLVIALDFDTQESCLELVDQLDPTLCRLKIGKELFTSCGPKIVEKIQWKGFDVFLDLKFHDIPNTVAKAVKAAAELGVWMVNVHASGGEKMMLAAREALEGYQVKPLLIAVTVLTSMSDEDLKALGITVTAAEQVQRLAALAKQAQMDGVVCSAQEVVQLKASLGEEFKMITPGIRPSFAGNDDQTRIMTPEQALKAGSDYLVVGRPVTQADDPLRALEQIAAEMARASLGS.

Substrate-binding positions include D13, K35, D62–T71, T121, R182, Q191, G211, and R212. K64 (proton donor) is an active-site residue.

The protein belongs to the OMP decarboxylase family. Type 1 subfamily. In terms of assembly, homodimer.

The enzyme catalyses orotidine 5'-phosphate + H(+) = UMP + CO2. Its pathway is pyrimidine metabolism; UMP biosynthesis via de novo pathway; UMP from orotate: step 2/2. Catalyzes the decarboxylation of orotidine 5'-monophosphate (OMP) to uridine 5'-monophosphate (UMP). In Saccharophagus degradans (strain 2-40 / ATCC 43961 / DSM 17024), this protein is Orotidine 5'-phosphate decarboxylase.